We begin with the raw amino-acid sequence, 472 residues long: Protein hedgehog (472 aa).

The N-palmitoyl cysteine moiety is linked to residue Cys84. Residues Glu149, Asp154, Glu185, Asp188, and Asp190 each contribute to the Ca(2+) site. Gly256 carries Cholesterol glycine ester lipidation.

It belongs to the hedgehog family. Interacts with shf. In terms of processing, the C-terminal part of the hedgehog protein precursor displays an autoproteolysis activity that results in the cleavage of the full-length protein into two parts (N-product and C-product). In addition, the C-terminal part displays a cholesterol transferase activity that results by the covalent attachment of a cholesterol moiety to the C-terminal of the newly generated N-product. The N-product is the active species in both local and long-range signaling, whereas the C-product has no signaling activity. Post-translationally, cholesterylation is required for N-product targeting to lipid rafts and multimerization. N-palmitoylation by Rasp of the hedgehog N-product, within the secretory pathway, is required for the embryonic and larval patterning activities of the hedgehog signal.

The protein localises to the nucleus. Its subcellular location is the cytoplasm. The protein resides in the cell membrane. It catalyses the reaction glycyl-L-cysteinyl-[protein] + cholesterol + H(+) = [protein]-C-terminal glycyl cholesterol ester + N-terminal L-cysteinyl-[protein]. Functionally, the C-terminal part of the hedgehog protein precursor displays an autoproteolysis activity that results in the cleavage of the full-length protein into two parts (N-product and C-product). In addition, the C-terminal part displays a cholesterol transferase activity that results by the covalent attachment of a cholesterol moiety to the C-terminal of the newly generated N-product. Once cleaved, the C-product has no signaling activity and diffuses from the cell. In terms of biological role, the dually lipidated hedgehog protein N-product is a morphogen which is essential for a variety of patterning events during development. Establishes the anterior-posterior axis of the embryonic segments and patterns the larval imaginal disks. Binds to the patched (ptc) receptor, which functions in association with smoothened (smo), to activate the transcription of target genes wingless (wg), decapentaplegic (dpp) and ptc. In the absence of hh, ptc represses the constitutive signaling activity of smo through fused (fu). Essential component of a signaling pathway which regulates the Duox-dependent gut immune response to bacterial uracil; required to activate Cad99C-dependent endosome formation, norpA-dependent Ca2+ mobilization and p38 MAPK, which are essential steps in the Duox-dependent production of reactive oxygen species (ROS) in response to intestinal bacterial infection. During photoreceptor differentiation, it up-regulates transcription of Ubr3, which in turn promotes the hh-signaling pathway by mediating the ubiquitination and degradation of cos. This is Protein hedgehog from Drosophila ananassae (Fruit fly).